An 845-amino-acid polypeptide reads, in one-letter code: Protein SPA1-RELATED 3 (845 aa).

Over residues 1 to 19 (MEGSSNSNSRGFNTSGVSD) the composition is skewed to polar residues. Disordered regions lie at residues 1–33 (MEGSSNSNSRGFNTSGVSDRNTEFLPVERLTTR) and 139–158 (CSDSGSDSLEDGPISQKEIG). Residues 1–297 (MEGSSNSNSR…MSDLLQSEFI (297 aa)) form the Protein kinase domain. Residues 301 to 329 (RDNLEEREAAIELRDRIEEQESLLEFLLL) adopt a coiled-coil conformation. 7 WD repeats span residues 532 to 571 (NSSNLVCALAFDREGELFATAGVNKKIKIFECNSIVNDNR), 581 to 621 (AGRS…LVTE), 624 to 664 (EHKK…SIGT), 666 to 706 (KTKA…IPLC), 710 to 748 (GHSKTVSYVKFVDSSTLVSSSTDNTLKLWDLSMSASGIN), 757 to 796 (GHTNLKNFVGLSVSDGYIATGSETNEVFVYHKAFPMPVMS), and 812 to 845 (DASQFISSICWRGQSSTLVAANSNGNIKILEMMT). The DWD box motif lies at 685–699 (AFGSADHKVYYYDLR).

In terms of assembly, interacts with COP1 and CO.

The protein localises to the nucleus. Its function is as follows. Repressor of photomorphogenesis in the light. Probably part of the COP1/SPA E3 ubiquitin-protein ligase complex. The protein is Protein SPA1-RELATED 3 (SPA3) of Arabidopsis thaliana (Mouse-ear cress).